The chain runs to 22 residues: Chlorophyllase type 1 (22 aa).

Belongs to the AB hydrolase superfamily. Lipase family.

The catalysed reaction is a chlorophyll + H2O = a chlorophyllide + phytol + H(+). It participates in porphyrin-containing compound metabolism; chlorophyll degradation. Its function is as follows. Catalyzes the hydrolysis of ester bond in chlorophyll to yield chlorophyllide and phytol. This is Chlorophyllase type 1 from Chenopodium album (Fat hen).